The sequence spans 57 residues: DNA-directed RNA polymerase subunit Rpo6 (57 aa).

This sequence belongs to the archaeal Rpo6/eukaryotic RPB6 RNA polymerase subunit family. In terms of assembly, part of the RNA polymerase complex.

The protein resides in the cytoplasm. The catalysed reaction is RNA(n) + a ribonucleoside 5'-triphosphate = RNA(n+1) + diphosphate. Functionally, DNA-dependent RNA polymerase (RNAP) catalyzes the transcription of DNA into RNA using the four ribonucleoside triphosphates as substrates. The polypeptide is DNA-directed RNA polymerase subunit Rpo6 (Thermococcus gammatolerans (strain DSM 15229 / JCM 11827 / EJ3)).